The following is a 258-amino-acid chain: Immediate-early protein IE-0 (258 aa).

The RING-type zinc finger occupies 191-237 (CNICEDSSAEEQFLKPNVCCGYRVCNACYAKLWEFCTGAYPVCPICK).

The chain is Immediate-early protein IE-0 (IE-0) from Lymantria dispar multicapsid nuclear polyhedrosis virus (LdMNPV).